The sequence spans 550 residues: MAAKEIHFDAEGRNALKRGVDKLADAVKVTLGPAGRNVIIDKKFGAPTVTKDGVTVAKEVELEDPVENMGAQMVREVASKTSDVAGDGTTTATVLAQAIYREGLKNVTAGANPMDLKRGIDKAVTGVIIELKKISRPIADKKEIAQVGCISANNDSEIGDLIAEAMEKVGKDGVITVEEAKGTETELKVVEGMQFDRGYLSPYFVTNADSMEAVLDEPYILIYDKKISNMKELLPILEKTAQSGRPLLIIAEEIEGEALATLVVNKLRGTLKVCAVKAPGFGDRRKAMLEDIAILTGGTVISEEKGYKLENATIGYLGQAGSVTIDKDNSTIVEGKGTEDDIKARINEIKNQVEKATSDYDKEKLQERLAKLSGGVAVLNIGATTEVEMKEKKARVEDALHATRAAVQEGIVAGGGVALIRAVTGLENVQVENEDQKTGLEIIRRALEEPLRQIVANTGTVDGSVVVMKVKEGKDDFGFNARTETFENMIAAGVIDPTMVTRTALENAASVAGLLLTTEAVISEKPEDEKMPPMPPGGGMGGMGGMGGMY.

ATP contacts are provided by residues 30 to 33 (TLGP), Lys51, 87 to 91 (DGTTT), Gly415, and Asp496. Residues 526–550 (PEDEKMPPMPPGGGMGGMGGMGGMY) form a disordered region. Residues 537–550 (GGGMGGMGGMGGMY) are compositionally biased toward gly residues.

It belongs to the chaperonin (HSP60) family. As to quaternary structure, forms a cylinder of 14 subunits composed of two heptameric rings stacked back-to-back. Interacts with the co-chaperonin GroES.

It is found in the cytoplasm. The enzyme catalyses ATP + H2O + a folded polypeptide = ADP + phosphate + an unfolded polypeptide.. Together with its co-chaperonin GroES, plays an essential role in assisting protein folding. The GroEL-GroES system forms a nano-cage that allows encapsulation of the non-native substrate proteins and provides a physical environment optimized to promote and accelerate protein folding. The polypeptide is Chaperonin GroEL (Chloroherpeton thalassium (strain ATCC 35110 / GB-78)).